The sequence spans 191 residues: Protein HP-20 homolog (191 aa).

Residues 1–16 (MADLRILVSIILMTNA) form the signal peptide. Residues 22–58 (GCTGPPGPPGHPGPPGIRGPPGIRGIPGLPGPPGTPG) enclose the Collagen-like domain. Positions 22–61 (GCTGPPGPPGHPGPPGIRGPPGIRGIPGLPGPPGTPGPSV) are disordered. The segment covering 26 to 39 (PPGPPGHPGPPGIR) has biased composition (pro residues). Positions 64 to 191 (PCHRQSAFTV…VTIYFSGFLT (128 aa)) constitute a C1q domain.

The protein localises to the secreted. The chain is Protein HP-20 homolog from Bos taurus (Bovine).